Here is a 238-residue protein sequence, read N- to C-terminus: MRLTSQVLSDAPTIINPEKQVTLSLRSLKIPYLENLGITKDTYEVIDLTDNELIELSNFPRLKNLKVLLVGNNNITGINDDKLPNNLPHLQSISFIHNNISKFSDVRILCRFKNLSNITFIENPITDSPNYRYFIVWLIPTLKVLDFSKVKQKELVKAKELFGESIDDPSELALSMLEDISTTESRKNQISSKDIRNLQDVGKKLTDEDKAKLLQELETADSVEDIERIERALHNGHM.

LRR repeat units follow at residues 19-40 (KQVT…GITK), 42-63 (TYEV…PRLK), 64-84 (NLKV…DKLP), and 89-110 (HLQS…RILC). In terms of domain architecture, LRRCT spans 123–161 (NPITDSPNYRYFIVWLIPTLKVLDFSKVKQKELVKAKEL).

Belongs to the U2 small nuclear ribonucleoprotein A family. Associated with the spliceosome.

Its subcellular location is the nucleus. Functionally, involved in pre-mRNA splicing. The chain is U2 small nuclear ribonucleoprotein A' (LEA1) from Debaryomyces hansenii (strain ATCC 36239 / CBS 767 / BCRC 21394 / JCM 1990 / NBRC 0083 / IGC 2968) (Yeast).